The following is a 237-amino-acid chain: Large ribosomal subunit protein uL2 (237 aa).

The interval 202 to 237 is disordered; it reads FGGGNRKHPGKPTTVSRNAPPGRKVGHIAARRTGKR. The span at 225–237 shows a compositional bias: basic residues; that stretch reads KVGHIAARRTGKR.

This sequence belongs to the universal ribosomal protein uL2 family. In terms of assembly, part of the 50S ribosomal subunit. Forms a bridge to the 30S subunit in the 70S ribosome.

In terms of biological role, one of the primary rRNA binding proteins. Required for association of the 30S and 50S subunits to form the 70S ribosome, for tRNA binding and peptide bond formation. It has been suggested to have peptidyltransferase activity; this is somewhat controversial. Makes several contacts with the 16S rRNA in the 70S ribosome. The chain is Large ribosomal subunit protein uL2 from Methanococcoides burtonii (strain DSM 6242 / NBRC 107633 / OCM 468 / ACE-M).